We begin with the raw amino-acid sequence, 442 residues long: Galactose/N-acetylgalactosamine-binding lectin CEL-III (442 aa).

The propeptide at 1–10 is removed in mature form; sequence MVSLVPCGFA. Gln-11 carries the post-translational modification Pyrrolidone carboxylic acid. Positions 11-304 are has hemagglutinating activity towards rabbit erythrocytes, but no hemolytic activity towards them; that stretch reads QVLCTNPLDI…DWEVPTATWN (294 aa). Disulfide bonds link Cys-14/Cys-59, Cys-31/Cys-48, and Cys-72/Cys-88. D-galactose is bound by residues Asp-19 and 33–36; that span reads DIVG. Ricin B-type lectin domains lie at 28–102 and 115–245; these read SKQC…RWRL and EQVA…WSRP. Ca(2+) contacts are provided by Asp-33, Ile-34, and Gly-36. 2 residues coordinate Mg(2+): Asn-42 and Ile-43. Position 49 (Asp-49) interacts with D-galactose. Asp-53 is a Ca(2+) binding site. Mg(2+) contacts are provided by Asn-82 and Val-83. D-galactose-binding positions include Val-117 and 131–134; that span reads DVEG. Cys-129 and Cys-146 are joined by a disulfide. Asp-131, Val-132, and Gly-134 together coordinate Ca(2+). Ile-141 provides a ligand contact to Mg(2+). 144 to 147 lines the D-galactose pocket; that stretch reads YDCQ. Residues Asp-151, Asp-178, Val-179, and Gly-181 each coordinate Ca(2+). An intrachain disulfide couples Cys-176 to Cys-193. 178-181 serves as a coordination point for D-galactose; the sequence is DVEG. Mg(2+)-binding residues include Asn-187 and Val-188. Residue 191–194 coordinates D-galactose; the sequence is YSCE. Residues Asp-198, Asp-219, Val-220, and Gly-222 each coordinate Ca(2+). Cys-217 and Cys-234 form a disulfide bridge. 219–222 lines the D-galactose pocket; sequence DVEG. Residues Asn-228 and Val-229 each coordinate Mg(2+). Residue 232 to 235 participates in D-galactose binding; it reads YRCD. Asp-239 is a Ca(2+) binding site. 2 cysteine pairs are disulfide-bonded: Cys-249/Cys-254 and Cys-264/Cys-281. The region spanning 261-293 is the Ricin B-type lectin 3 domain; it reads SNKCLDVSGDQGTGDVGTWQCDGLPDQRFKWVF. 3 residues coordinate Ca(2+): Asp-266, Val-267, and Gly-269. 266–269 contributes to the D-galactose binding site; the sequence is DVSG. 2 residues coordinate Mg(2+): Asp-275 and Val-276. D-galactose contacts are provided by residues 279–282 and Asp-286; that span reads WQCD. Ca(2+) is bound at residue Asp-286. The has a strong tendency to self-associate leading to formation of oligomers stretch occupies residues 294 to 442; that stretch reads DDWEVPTATW…NEDCTFCTDI (149 aa). 4 disulfides stabilise this stretch: Cys-308–Cys-390, Cys-377–Cys-416, Cys-425–Cys-439, and Cys-431–Cys-436.

As to quaternary structure, oligomerizes in the human and rabbit erythrocyte membranes. Oligomerization is induced by binding of beta-1,4-linked disaccharide ligands such as lactose, lactulose, N-acetyllactosamine and phenyl-beta-D-galactoside, but only a little by N-acetylgalactosamine and galactose, and not at all by melibiose in aqueous solution in the presence of high salt concentration and pH 10. Forms heptamers that assemble into larger 21mer oligomers, which may be inserted as a transmembrane pore to the erythrocyte membrane. Ca(2+) is required as a cofactor. The cofactor is Mg(2+). Expressed in body fluid (at protein level).

The protein resides in the secreted. With respect to regulation, ca(2+) is required for hemolytic activity and the activity increases with increasing calcium concentration. Hemolytic activity is inhibited by N-acetylgalactosamine (GalNAc), lactose, lactulose, galactosamine, dextran with molecular masses greater than 4 kDa, to a lesser extent by inulin and only slightly by sucrose and melezitose, but not by glucose or mannose. The activity is abolished in the presence of 10 mM EDTA. Lactose-binding increases with increasing calcium concentration, but calcium has no effect on hemagglutinating activity. Cytotoxic effect on Madin-Darby canine kidney (MDCK) cell line is strongly inhibited by galactose, lactose and N-acetylgalactosamine (GalNAc), but not by raffinose, N-acetylglucosamine (GlcNAc), glucose, mannose, ribose or sucrose. Pore formation in artificial lactosyl ceramide (LacCer) or globotetraosylceramide (Gb4Cer) containing liposomes is strongly inhibited by lactose. Its function is as follows. Galactose/N-acetylgalactosamine (Gal/GalNAc)-binding lectin with hemolytic activity. Favors saccharides that have a beta-1,4 linkage at the non-reducing end rather than saccharides having alpha-1,6 or alpha-1,4 linkages. Binds lactose, lactulose, GalNAc, galactosamine, methyl alpha-galactopyranoside, methyl beta-galactopyranoside, N-acetyllactosamine, p-nitrophenyl beta-D-galactopyranoside (pNP-Gal), p-nitrophenyl N-acetyl-beta-D-galactosaminide (pNP-GalNAc), asialofetuin, and human erythrocyte membrane lipids lactosyl ceramide (LacCer) and globoside globotetraosylceramide (Gb4Cer). Binds moderately to galactose, melibiose, raffinose, fucose, methyl alpha-galactoside and methyl beta-galactoside. Binds weakly to glucose, mannose and N-acetylglucosamine (GlcNAc). Has hemolytic activity towards human (A, B and O-type), rabbit and rat erythrocytes, but not towards mouse, chicken or horse erythrocytes. Forms ion-permeable transmembrane pores in the erythrocyte membrane as well as in artificial liposomes containing human erythrocyte membrane lipids LacCer, Gb4Cer and galactosyl ceramide (GalCer) leading to destruction of the membrane. Has hemagglutinating activity towards rabbit, human and rat erythrocytes, and at relatively high concentrations towards chicken and horse erythrocytes, but not towards mouse erythrocytes. Has dose-dependent cytotoxic effect on Madin-Darby canine kidney (MDCK), African green monkey kidney (Vero) and human epithelia carcinoma (HeLa) cell lines, but Chinese hamster ovary (CHO), rat sarcoma (XC) and potoroo rat kangaroo kidney (PtK1) cells are highly resistant to the cytotoxic effect of this protein. Impairs malaria parasite development in malaria parasite infected transgenic A.stephensi mosquitoes expressing this protein specifically in their midguts. Binds to ookinetes and leads to strong dose-dependent inhibition of ookinete formation in vitro. Leads to severely impaired oocyst formation and significantly reduced sporozoite production of rodent malaria parasite P.berghei in the salivary glands of the transgenic mosquitoes. The parasite transmission to uninfected mice (vectorial competence) of these mosquitoes is significantly impaired. Also leads to severely impaired oocyst formation of human malaria parasite P.falciparum in transgenic mosquitoes fed on mature P.falciparum gametocyte cultures. May be involved in defense mechanisms acting as a toxic protein to foreign microorganisms. May act in defense against predators. This Pseudocnus echinatus (Sea cucumber) protein is Galactose/N-acetylgalactosamine-binding lectin CEL-III.